A 391-amino-acid polypeptide reads, in one-letter code: Homocitrate synthase AksA (391 aa).

The region spanning 20-271 (ITIYDTTLRD…DLGFNIGVLY (252 aa)) is the Pyruvate carboxyltransferase domain.

It belongs to the alpha-IPM synthase/homocitrate synthase family.

It carries out the reaction acetyl-CoA + 2-oxoglutarate + H2O = (2R)-homocitrate + CoA + H(+). The catalysed reaction is 2-oxoadipate + acetyl-CoA + H2O = (R)-dihomocitrate + CoA + H(+). The enzyme catalyses 2-oxoheptanedioate + acetyl-CoA + H2O = (R)-trihomocitrate + CoA + H(+). Its pathway is organic acid metabolism; 2-oxosuberate biosynthesis. Catalyzes the condensation of alpha-ketoglutarate and acetyl-CoA to form (R)-homocitrate. Can also catalyze the condensation of alpha-ketoadipate with acetyl-CoA to form (R)-homo(2)citrate, and the condensation of alpha-ketopimelate with acetyl-CoA to form (R)-homo(3)citrate. These reactions are part of the biosynthesis pathway of coenzyme B and biotin. The sequence is that of Homocitrate synthase AksA (aksA) from Methanothermobacter thermautotrophicus (strain ATCC 29096 / DSM 1053 / JCM 10044 / NBRC 100330 / Delta H) (Methanobacterium thermoautotrophicum).